Here is a 473-residue protein sequence, read N- to C-terminus: Photosystem II CP43 reaction center protein (473 aa).

The propeptide occupies M1–E14. Position 15 is an N-acetylthreonine (T15). T15 carries the post-translational modification Phosphothreonine. The next 5 helical transmembrane spans lie at L69–A93, L134–N155, K178–T200, K255–S275, and W291–A312. E367 is a [CaMn4O5] cluster binding site. Residues R447–P471 form a helical membrane-spanning segment.

Belongs to the PsbB/PsbC family. PsbC subfamily. PSII is composed of 1 copy each of membrane proteins PsbA, PsbB, PsbC, PsbD, PsbE, PsbF, PsbH, PsbI, PsbJ, PsbK, PsbL, PsbM, PsbT, PsbX, PsbY, PsbZ, Psb30/Ycf12, at least 3 peripheral proteins of the oxygen-evolving complex and a large number of cofactors. It forms dimeric complexes. Binds multiple chlorophylls and provides some of the ligands for the Ca-4Mn-5O cluster of the oxygen-evolving complex. It may also provide a ligand for a Cl- that is required for oxygen evolution. PSII binds additional chlorophylls, carotenoids and specific lipids. serves as cofactor.

The protein localises to the plastid. It is found in the chloroplast thylakoid membrane. In terms of biological role, one of the components of the core complex of photosystem II (PSII). It binds chlorophyll and helps catalyze the primary light-induced photochemical processes of PSII. PSII is a light-driven water:plastoquinone oxidoreductase, using light energy to abstract electrons from H(2)O, generating O(2) and a proton gradient subsequently used for ATP formation. The protein is Photosystem II CP43 reaction center protein of Phaseolus vulgaris (Kidney bean).